A 503-amino-acid chain; its full sequence is MAMSAPTVELMDYADVVARYEPVLGMEVHVELSTATKMFCGCPTDFGAEPNTQVCPVCLGLPGSLPVVNEKAVESAIRIGLALNCSITPWGRFARKNYFYPDQPKNYQISQYDEPIATDGHLDVVLDDGSVFRVDIERAHMEEDTGKSVHVGGATGRIHGASHSLLDYNRAGVPLIEIVTKPITGAGERAPEVARAYVTALRDLLKSLGVSDVKMEQGSLRCDANVSLMPVGASEFGTRTETKNVNSLKSVEVAVRYEMRRQAAVLAAGGAIVQETRHFHESDGTTSPGRRKETAEDYRYFPEPDLEPIAPSPEWIEELRATIPEYPWLRRARIQQEWGVSDEVMRDVVNAGALDLIIATVEAGAPANEARSWWVAYLSEKAKERGVALDELPITPAQVAEVVKLVESKTVNSKVAKQVVDFVLAGEGEPAAVVEAKGLGMVSDDSALQAEVEKALAANPDIADKIRAGKVQAAGKIVGDVMKATRGQADAARVRELVLAACS.

This sequence belongs to the GatB/GatE family. GatB subfamily. As to quaternary structure, heterotrimer of A, B and C subunits.

The enzyme catalyses L-glutamyl-tRNA(Gln) + L-glutamine + ATP + H2O = L-glutaminyl-tRNA(Gln) + L-glutamate + ADP + phosphate + H(+). It catalyses the reaction L-aspartyl-tRNA(Asn) + L-glutamine + ATP + H2O = L-asparaginyl-tRNA(Asn) + L-glutamate + ADP + phosphate + 2 H(+). Functionally, allows the formation of correctly charged Asn-tRNA(Asn) or Gln-tRNA(Gln) through the transamidation of misacylated Asp-tRNA(Asn) or Glu-tRNA(Gln) in organisms which lack either or both of asparaginyl-tRNA or glutaminyl-tRNA synthetases. The reaction takes place in the presence of glutamine and ATP through an activated phospho-Asp-tRNA(Asn) or phospho-Glu-tRNA(Gln). This chain is Aspartyl/glutamyl-tRNA(Asn/Gln) amidotransferase subunit B, found in Nocardia farcinica (strain IFM 10152).